Here is a 491-residue protein sequence, read N- to C-terminus: uncharacterized protein (491 aa).

An ATP-binding site is contributed by 266–273 (GIQGTGKS).

It belongs to the AAA ATPase family. Highly divergent.

It localises to the plastid. It is found in the chloroplast. This is an uncharacterized protein from Porphyra purpurea (Red seaweed).